A 227-amino-acid chain; its full sequence is Probable septum site-determining protein MinC (227 aa).

Belongs to the MinC family. In terms of assembly, interacts with MinD and FtsZ.

Its function is as follows. Cell division inhibitor that blocks the formation of polar Z ring septums. Rapidly oscillates between the poles of the cell to destabilize FtsZ filaments that have formed before they mature into polar Z rings. Prevents FtsZ polymerization. The chain is Probable septum site-determining protein MinC from Bacillus pumilus (strain SAFR-032).